Reading from the N-terminus, the 175-residue chain is uncharacterized protein (175 aa).

The N-terminal stretch at 1 to 33 is a signal peptide; sequence MERLPYEIVSTIFRKAILHYVLIRGTTYPQSLA.

This is an uncharacterized protein from Methanocaldococcus jannaschii (strain ATCC 43067 / DSM 2661 / JAL-1 / JCM 10045 / NBRC 100440) (Methanococcus jannaschii).